The chain runs to 215 residues: Cytochrome b6 (215 aa).

Residues 32–52 form a helical membrane-spanning segment; the sequence is IFYCLGGITLTCFLVQVATGF. Residue Cys-35 coordinates heme c. His-86 and His-100 together coordinate heme b. Transmembrane regions (helical) follow at residues 90-110, 116-136, and 186-206; these read ASMM…TGGF, LTWV…VTGY, and LHTF…FLMI. Residues His-187 and His-202 each coordinate heme b.

It belongs to the cytochrome b family. PetB subfamily. In terms of assembly, the 4 large subunits of the cytochrome b6-f complex are cytochrome b6, subunit IV (17 kDa polypeptide, PetD), cytochrome f and the Rieske protein, while the 4 small subunits are PetG, PetL, PetM and PetN. The complex functions as a dimer. Heme b is required as a cofactor. Heme c serves as cofactor.

It is found in the plastid. It localises to the chloroplast thylakoid membrane. Its function is as follows. Component of the cytochrome b6-f complex, which mediates electron transfer between photosystem II (PSII) and photosystem I (PSI), cyclic electron flow around PSI, and state transitions. The chain is Cytochrome b6 from Pisum sativum (Garden pea).